Consider the following 112-residue polypeptide: Nitrogen regulatory protein P-II (112 aa).

An O-UMP-tyrosine modification is found at Tyr-51.

This sequence belongs to the P(II) protein family. In terms of assembly, homotrimer.

In nitrogen-limiting conditions, when the ratio of Gln to 2-ketoglutarate decreases, P-II is uridylylated to P-II-UMP. P-II-UMP allows the deadenylation of glutamine synthetase (GS), thus activating the enzyme. Conversely, in nitrogen excess P-II is deuridylated and promotes the adenylation of GS. P-II indirectly controls the transcription of the GS gene (glnA). P-II prevents NR-II-catalyzed conversion of NR-I to NR-I-phosphate, the transcriptional activator of glnA. When P-II is uridylylated to P-II-UMP, these events are reversed. This chain is Nitrogen regulatory protein P-II (glnB), found in Aquifex aeolicus (strain VF5).